The sequence spans 823 residues: Tax1-binding protein 1 homolog B (823 aa).

Residues 149 to 487 (VTTKASYLEQ…QKQVVKFNEQ (339 aa)) adopt a coiled-coil conformation. Disordered regions lie at residues 342–377 (HRQL…QQAN) and 486–519 (EQQG…STSD). Basic and acidic residues predominate over residues 356-368 (KALREQLRQKEEQ). The span at 498–518 (AAAGPLSASPEASAPGSPSTS) shows a compositional bias: low complexity. A coiled-coil region spans residues 548-638 (QMLNEERERC…NREEEQKDSN (91 aa)). The tract at residues 650-746 (MPYAQDDPSP…EPAAPEPAEF (97 aa)) is disordered. A compositionally biased stretch (acidic residues) spans 723–739 (LEEPEEPQSTQNDDEPA). 2 consecutive UBZ1-type zinc fingers follow at residues 762-788 (QKRC…VESH) and 789-815 (WKIC…VLTH). Positions 765, 768, 784, 788, 792, 795, 811, and 815 each coordinate Zn(2+).

In terms of tissue distribution, expressed at relatively high levels in both proximal and distal regions of the fin bud during pectoral fin development.

Functionally, may have anti-apoptotic activity. The polypeptide is Tax1-binding protein 1 homolog B (tax1bp1b) (Danio rerio (Zebrafish)).